The sequence spans 326 residues: Beta-ketoacyl-[acyl-carrier-protein] synthase III (326 aa).

Active-site residues include cysteine 112 and histidine 251. The interval 252-256 (QANSR) is ACP-binding. Asparagine 281 is an active-site residue.

The protein belongs to the thiolase-like superfamily. FabH family. As to quaternary structure, homodimer.

Its subcellular location is the cytoplasm. The catalysed reaction is malonyl-[ACP] + acetyl-CoA + H(+) = 3-oxobutanoyl-[ACP] + CO2 + CoA. It functions in the pathway lipid metabolism; fatty acid biosynthesis. In terms of biological role, catalyzes the condensation reaction of fatty acid synthesis by the addition to an acyl acceptor of two carbons from malonyl-ACP. Catalyzes the first condensation reaction which initiates fatty acid synthesis and may therefore play a role in governing the total rate of fatty acid production. Possesses both acetoacetyl-ACP synthase and acetyl transacylase activities. Its substrate specificity determines the biosynthesis of branched-chain and/or straight-chain of fatty acids. This is Beta-ketoacyl-[acyl-carrier-protein] synthase III from Clostridium botulinum (strain ATCC 19397 / Type A).